The following is a 136-amino-acid chain: Cystatin-2 (136 aa).

An N-terminal signal peptide occupies residues 1 to 24 (MALLRGFLVCSLLLLSCICKEALG). The Cystatin domain maps to 29-124 (GGLENASPEE…CTFEVYNIPW (96 aa)). A Secondary area of contact motif is present at residues 73 to 77 (QIVSG). 2 disulfides stabilise this stretch: C91-C101 and C115-C135.

This sequence belongs to the cystatin family. As to expression, expressed by the venom gland.

It localises to the secreted. Inhibits various C1 cysteine proteases including cathepsin L, papain and cathepsin B. This protein has no toxic activity and its function in the venom is unknown. It may play a role as housekeeping or regulatory protein. The sequence is that of Cystatin-2 from Crotalus adamanteus (Eastern diamondback rattlesnake).